Reading from the N-terminus, the 397-residue chain is Aspartate/prephenate aminotransferase (397 aa).

L-aspartate-binding residues include glycine 38, tryptophan 124, and asparagine 174. At lysine 238 the chain carries N6-(pyridoxal phosphate)lysine. An L-aspartate-binding site is contributed by arginine 375.

The protein belongs to the class-I pyridoxal-phosphate-dependent aminotransferase family. As to quaternary structure, homodimer. Requires pyridoxal 5'-phosphate as cofactor.

It localises to the cytoplasm. The enzyme catalyses L-aspartate + 2-oxoglutarate = oxaloacetate + L-glutamate. The catalysed reaction is L-arogenate + 2-oxoglutarate = prephenate + L-glutamate. Its function is as follows. Catalyzes the reversible conversion of aspartate and 2-oxoglutarate to glutamate and oxaloacetate. Can also transaminate prephenate in the presence of glutamate, with lower efficiency. The chain is Aspartate/prephenate aminotransferase from Nitrosomonas europaea (strain ATCC 19718 / CIP 103999 / KCTC 2705 / NBRC 14298).